We begin with the raw amino-acid sequence, 266 residues long: Mitochondrial import inner membrane translocase subunit Tim29 (266 aa).

The transit peptide at 1–37 (MVTAALKRFWSGGHGEAGGEAGGATTVAVKPGLWTRL) directs the protein to the mitochondrion. Over 38–65 (STWAGALLRDYAEACGDAAAAARARPGR) the chain is Mitochondrial matrix. The helical transmembrane segment at 66–83 (AALYVGLLGGAAACCALA) threads the bilayer. At 84–266 (PSEAAFEEAL…DSLVQSDVSR (183 aa)) the chain is on the mitochondrial intermembrane side.

In terms of assembly, component of the TIM22 complex, which core is composed of TIMM22, associated with TIMM10 (TIMM10A and/or TIMM10B), TIMM9, AGK and TIMM29. Interacts with TIMM10B; the interaction is direct. Interacts with TOMM40; linking the TIM22 complex to the TOM complex. Interacts with TIMM22 (when oxidized); the interaction is direct.

It localises to the mitochondrion inner membrane. Functionally, component of the TIM22 complex, a complex that mediates the import and insertion of multi-pass transmembrane proteins into the mitochondrial inner membrane. The TIM22 complex forms a twin-pore translocase that uses the membrane potential as the external driving force. Required for the stability of the TIM22 complex and functions in the assembly of the TIMM22 protein into the TIM22 complex. May facilitate cooperation between TIM22 and TOM complexes by interacting with TOMM40. The protein is Mitochondrial import inner membrane translocase subunit Tim29 (Timm29) of Mus musculus (Mouse).